The following is a 279-amino-acid chain: Protease HtpX homolog (279 aa).

The next 2 helical transmembrane spans lie at 4–24 and 34–54; these read IFLF…VLAV and GSLL…SLLM. Residue His140 participates in Zn(2+) binding. Glu141 is a catalytic residue. His144 provides a ligand contact to Zn(2+). 2 helical membrane-spanning segments follow: residues 155-175 and 189-209; these read LIQG…ANLI and FLVS…IVMW. Glu215 contacts Zn(2+).

It belongs to the peptidase M48B family. The cofactor is Zn(2+).

It is found in the cell inner membrane. The sequence is that of Protease HtpX homolog from Neisseria gonorrhoeae (strain ATCC 700825 / FA 1090).